A 248-amino-acid polypeptide reads, in one-letter code: Probable transcriptional regulatory protein Acel_1346 (248 aa).

The protein belongs to the TACO1 family.

It is found in the cytoplasm. The protein is Probable transcriptional regulatory protein Acel_1346 of Acidothermus cellulolyticus (strain ATCC 43068 / DSM 8971 / 11B).